The chain runs to 227 residues: 2,3-bisphosphoglycerate-dependent phosphoglycerate mutase (227 aa).

Substrate contacts are provided by residues 7-14 (RHGFSEWN), 20-21 (TG), Arg-59, 86-89 (ERHY), Lys-97, 113-114 (RR), and 182-183 (GN). Catalysis depends on His-8, which acts as the Tele-phosphohistidine intermediate. The active-site Proton donor/acceptor is Glu-86.

Belongs to the phosphoglycerate mutase family. BPG-dependent PGAM subfamily. As to quaternary structure, homodimer.

The enzyme catalyses (2R)-2-phosphoglycerate = (2R)-3-phosphoglycerate. It participates in carbohydrate degradation; glycolysis; pyruvate from D-glyceraldehyde 3-phosphate: step 3/5. In terms of biological role, catalyzes the interconversion of 2-phosphoglycerate and 3-phosphoglycerate. The sequence is that of 2,3-bisphosphoglycerate-dependent phosphoglycerate mutase from Haemophilus ducreyi (strain 35000HP / ATCC 700724).